The sequence spans 92 residues: Small ribosomal subunit protein uS19 (92 aa).

The protein belongs to the universal ribosomal protein uS19 family.

Its function is as follows. Protein S19 forms a complex with S13 that binds strongly to the 16S ribosomal RNA. The polypeptide is Small ribosomal subunit protein uS19 (Corynebacterium urealyticum (strain ATCC 43042 / DSM 7109)).